Here is a 347-residue protein sequence, read N- to C-terminus: 4-hydroxy-2-oxovalerate aldolase 2 (347 aa).

The region spanning 7–259 (VRITDTSLRD…KTGIDFFDIA (253 aa)) is the Pyruvate carboxyltransferase domain. Residue 15-16 (RD) participates in substrate binding. Aspartate 16 is a Mn(2+) binding site. The active-site Proton acceptor is histidine 19. Residues serine 169 and histidine 198 each contribute to the substrate site. Residues histidine 198 and histidine 200 each contribute to the Mn(2+) site. Tyrosine 289 serves as a coordination point for substrate.

The protein belongs to the 4-hydroxy-2-oxovalerate aldolase family.

It catalyses the reaction (S)-4-hydroxy-2-oxopentanoate = acetaldehyde + pyruvate. This chain is 4-hydroxy-2-oxovalerate aldolase 2, found in Mycobacterium marinum (strain ATCC BAA-535 / M).